The chain runs to 432 residues: Bifunctional IPC transferase and DIPP synthase (432 aa).

The tract at residues 3 to 225 (PERAVILAAG…RARRMLVRTA (223 aa)) is mobA-like NTP transferase. CTP-binding positions include 9–11 (LAA), lysine 22, and glutamate 113. Mg(2+) is bound at residue glutamate 113. The segment at 226 to 426 (VKGTGDGFVS…LTLYFVVKKV (201 aa)) is CDP-alcohol phosphatidyltransferases. 3 consecutive transmembrane segments (helical) span residues 264–284 (FLLG…AGIL), 337–356 (IWYF…SYST), and 385–405 (VFLT…ALFL).

This sequence in the N-terminal section; belongs to the MobA family. The protein in the C-terminal section; belongs to the CDP-alcohol phosphatidyltransferase class-I family. Mg(2+) serves as cofactor.

It localises to the membrane. The enzyme catalyses 1D-myo-inositol 3-phosphate + CTP + H(+) = CDP-1L-myo-inositol + diphosphate. It catalyses the reaction CDP-1L-myo-inositol + 1D-myo-inositol 3-phosphate = bis(1L-myo-inositol) 3,1'-phosphate 1-phosphate + CMP + H(+). Functionally, involved in biosynthesis of di-myo-inositol phosphate (DIP), a widespread organic solute in microorganisms adapted to hot environments. Catalyzes the condensation of CTP and L-myo-inositol-1-phosphate into CDP-L-myo-inositol, as well as the biosynthesis of di-myo-inositol-1,3'-phosphate-1'-phosphate (DIPP) from CDP-L-myo-inositol and L-myo-inositol-1-phosphate. This Thermococcus kodakarensis (strain ATCC BAA-918 / JCM 12380 / KOD1) (Pyrococcus kodakaraensis (strain KOD1)) protein is Bifunctional IPC transferase and DIPP synthase.